Consider the following 647-residue polypeptide: MALSTILTAAAMPVAGLFAFAQQSSAFFDQIPVLGSMLNSPVGTYDAQAAQMDGRIQARDLLSSHFGPVGWPHQSFDYVIVGGGTAGLAMAKRLSEEEGNSVALIEAGGFYEMDAGNATEVPMYLFNYFFDNGYMKNPLFDWYQYTEPQEGLHNREMFYMQGKTLGGSTARGAMLYHRGSKGAYQKWADEVGDDSYTWEKWLPHFQRGIKFSGPNTNPRPANATAVNDDKAWSASGGPVHVAYPYLTNAISSWVDKALDSFGFSNVQGFSNGVLLGKSYITHTINPFTRRRETASSSYLREALVESNNLNIYIRTLAKKVLFDENKKANAVEVQTDGFKWKIEAKKEVILSAGVMRSPQLLMVSGIGPKETLEKLDIPVLSDRPGVGQNMQDTIILGPTNPIRVESHSQLLGGKDTLPRSIDDYNNHRTGLLTNPGQDFFAFEKHAEEGPGSLSKETAADIDANFPADWPTYSFIALDDTFVPQFNGKNYFSMSAALMTTFSRGYVSINSTDTLDNPIVDPKWLSDPRDQEMAVAAFRRCRQFTQHEILQDVIDGEELLPGKKYQTDDEVLGYIAETSDAYYAGVGTAAMGKKDDPKAVLDSKARVLGVQGLRVVDASSFPFAIDGQPMGTVYALAEKIAADIIAGN.

The signal sequence occupies residues Met-1 to Ala-26. Residues Thr-85–Ala-86 and Glu-106–Ala-107 each bind FAD. The N-linked (GlcNAc...) asparagine glycan is linked to Asn-117. An FAD-binding site is contributed by Gly-172 to Leu-175. Asn-222 and Asn-509 each carry an N-linked (GlcNAc...) asparagine glycan. FAD-binding positions include Ala-617 and Pro-628 to Met-629.

It belongs to the GMC oxidoreductase family. As to quaternary structure, homodimer. The cofactor is FAD.

Its subcellular location is the cytoplasm. The protein localises to the cytosol. The enzyme catalyses (2S-3S)-versiconal hemiacetal = versicolorin B + H2O. The catalysed reaction is (S)-5'-oxoaverantin + H(+) = (1'S,5'S)-averufin + H2O. The protein operates within mycotoxin biosynthesis. Versicolorin B synthase; part of the fragmented gene cluster that mediates the biosynthesis of dothistromin (DOTH), a polyketide toxin very similar in structure to the aflatoxin precursor, versicolorin B. The first step of the pathway is the conversion of acetate to norsolorinic acid (NOR) and requires the fatty acid synthase subunits hexA and hexB, as well as the polyketide synthase pksA. PksA combines a hexanoyl starter unit and 7 malonyl-CoA extender units to synthesize the precursor NOR. The hexanoyl starter unit is provided to the acyl-carrier protein (ACP) domain by the fungal fatty acid synthase hexA/hexB. The second step is the conversion of NOR to averantin (AVN) and requires the norsolorinic acid ketoreductase nor1, which catalyzes the dehydration of norsolorinic acid to form (1'S)-averantin. The cytochrome P450 monooxygenase avnA then catalyzes the hydroxylation of AVN to 5'hydroxyaverantin (HAVN). The next step is performed by adhA that transforms HAVN to averufin (AVF). Averufin might then be converted to hydroxyversicolorone by cypX and avfA. Hydroxyversicolorone is further converted versiconal hemiacetal acetate (VHA) by moxY. VHA is then the substrate for the versiconal hemiacetal acetate esterase est1 to yield versiconal (VAL). Versicolorin B synthase vbsA then converts VAL to versicolorin B (VERB) by closing the bisfuran ring. Then, the activity of the versicolorin B desaturase verB leads to versicolorin A (VERA). DotB, a predicted chloroperoxidase, may perform epoxidation of the A-ring of VERA. Alternatively, a cytochrome P450, such as cypX or avnA could catalyze this step. It is also possible that another, uncharacterized, cytochrome P450 enzyme is responsible for this step. Opening of the epoxide could potentially be achieved by the epoxide hydrolase epoA. However, epoA seems not to be required for DOTH biosynthesis, but other epoxide hydrolases may have the ability to complement this hydrolysis. Alternatively, opening of the epoxide ring could be achieved non-enzymatically. The next step is the deoxygenation of ring A to yield the 5,8-dihydroxyanthraquinone which is most likely catalyzed by the NADPH dehydrogenase encoded by ver1. The last stages of DOTH biosynthesis are proposed to involve hydroxylation of the bisfuran. OrdB and norB might have oxidative roles here. An alternative possibility is that cytochrome P450 monoogenases such as avnA and cypX might perform these steps in addition to previously proposed steps. The sequence is that of Versicolorin B synthase from Dothistroma septosporum (Red band needle blight fungus).